The chain runs to 312 residues: Olfactory receptor 13J1 (312 aa).

Residues Met1 to His25 are Extracellular-facing. N-linked (GlcNAc...) asparagine glycosylation occurs at Asn5. A helical membrane pass occupies residues Leu26–Met46. The Cytoplasmic portion of the chain corresponds to Ala47–His54. A helical transmembrane segment spans residues Leu55–Pro75. The Extracellular segment spans residues Thr76–Ile99. A disulfide bond links Cys97 and Cys189. Residues Gln100–Tyr120 form a helical membrane-spanning segment. The Cytoplasmic segment spans residues Asp121–Arg139. The chain crosses the membrane as a helical span at residues Leu140 to Met160. The Extracellular segment spans residues Val161–Asp197. The N-linked (GlcNAc...) asparagine glycan is linked to Asn191. The chain crosses the membrane as a helical span at residues Phe198–Ser217. The Cytoplasmic portion of the chain corresponds to Tyr218–Ala237. A helical membrane pass occupies residues Phe238–Met258. Residues Tyr259 to Asp271 lie on the Extracellular side of the membrane. A helical membrane pass occupies residues Glu272–Leu292. Topologically, residues Arg293 to Arg312 are cytoplasmic.

This sequence belongs to the G-protein coupled receptor 1 family.

It is found in the cell membrane. Functionally, odorant receptor. This is Olfactory receptor 13J1 (OR13J1) from Homo sapiens (Human).